We begin with the raw amino-acid sequence, 159 residues long: Phosphopantetheine adenylyltransferase (159 aa).

Position 9 (Thr9) interacts with substrate. ATP-binding positions include 9–10 (TF) and His17. Substrate contacts are provided by Lys41, Leu73, and Arg87. Residues 88-90 (GLR), Glu98, and 123-129 (YSFISST) contribute to the ATP site.

The protein belongs to the bacterial CoaD family. As to quaternary structure, homohexamer. Requires Mg(2+) as cofactor.

The protein localises to the cytoplasm. It carries out the reaction (R)-4'-phosphopantetheine + ATP + H(+) = 3'-dephospho-CoA + diphosphate. The protein operates within cofactor biosynthesis; coenzyme A biosynthesis; CoA from (R)-pantothenate: step 4/5. Reversibly transfers an adenylyl group from ATP to 4'-phosphopantetheine, yielding dephospho-CoA (dPCoA) and pyrophosphate. The sequence is that of Phosphopantetheine adenylyltransferase from Pseudomonas fluorescens (strain ATCC BAA-477 / NRRL B-23932 / Pf-5).